The following is a 150-amino-acid chain: Catabolic 3-dehydroquinase 1 (150 aa).

Residue Y24 is the Proton acceptor of the active site. Substrate is bound by residues N75, H81, and D88. Residue H101 is the Proton donor of the active site. Residues 102-103 (VS) and R112 each bind substrate.

It belongs to the type-II 3-dehydroquinase family. In terms of assembly, homododecamer. Adopts a ring-like structure, composed of an arrangement of two hexameric rings stacked on top of one another.

The catalysed reaction is 3-dehydroquinate = 3-dehydroshikimate + H2O. The protein operates within aromatic compound metabolism; 3,4-dihydroxybenzoate biosynthesis; 3,4-dihydroxybenzoate from 3-dehydroquinate: step 1/2. Its function is as follows. Is involved in the catabolism of quinate. Allows the utilization of quinate as carbon source via the beta-ketoadipate pathway. This chain is Catabolic 3-dehydroquinase 1, found in Aspergillus fumigatus (strain ATCC MYA-4609 / CBS 101355 / FGSC A1100 / Af293) (Neosartorya fumigata).